Reading from the N-terminus, the 429-residue chain is Protein ORF66 (429 aa).

Belongs to the herpesviridae UL49 family. As to quaternary structure, interacts with ORF34.

It localises to the host nucleus. Its subcellular location is the host cytoplasm. Functionally, participates in the expression of late viral mRNAs. This is Protein ORF66 (ORF66) from Homo sapiens (Human).